A 392-amino-acid polypeptide reads, in one-letter code: Tryptophan synthase beta chain (392 aa).

Lysine 86 is subject to N6-(pyridoxal phosphate)lysine.

It belongs to the TrpB family. Tetramer of two alpha and two beta chains. Requires pyridoxal 5'-phosphate as cofactor.

It catalyses the reaction (1S,2R)-1-C-(indol-3-yl)glycerol 3-phosphate + L-serine = D-glyceraldehyde 3-phosphate + L-tryptophan + H2O. The protein operates within amino-acid biosynthesis; L-tryptophan biosynthesis; L-tryptophan from chorismate: step 5/5. Functionally, the beta subunit is responsible for the synthesis of L-tryptophan from indole and L-serine. This chain is Tryptophan synthase beta chain (trpB), found in Buchnera aphidicola subsp. Melaphis rhois.